A 703-amino-acid chain; its full sequence is Ubiquitin-like modifier-activating enzyme ATG7 (703 aa).

Ala-2 carries the N-acetylalanine modification. The FAP motif motif lies at 15–17 (FAP). Residue Lys-45 forms a Glycyl lysine isopeptide (Lys-Gly) (interchain with G-Cter in ubiquitin) linkage. The active-site Glycyl thioester intermediate is the Cys-572. Ser-698 is subject to Phosphoserine.

It belongs to the ATG7 family. Homodimer. Interacts with ATG3; this interaction is essential for the transfer of ATG8-like proteins's thioester from ATG7 to ATG3 and plays a role in the conjugation of ATG12 to ATG5. Interacts with ATG12. Forms intermediate conjugates with GABARAPL1. Forms intermediate conjugates with ATG8-like proteins such as GABARAP, GABARAPL2 or MAP1LC3A. Interacts with EP300 acetyltransferase. Interacts with FOXO1. Post-translationally, acetylated by EP300. In terms of processing, polyubiquitinated on Lys-45 via 'Lys-63'-linked ubiquitin by TRIM32; this modification positiely regulates ATG8 and ATG12 activating enzyme activity leading to initiation of autophagy under metabolic stress. In terms of tissue distribution, widely expressed, especially in kidney, liver, lymph nodes and bone marrow.

The protein localises to the cytoplasm. It localises to the preautophagosomal structure. E1-like activating enzyme involved in the 2 ubiquitin-like systems required for cytoplasm to vacuole transport (Cvt) and autophagy. Activates ATG12 for its conjugation with ATG5 as well as the ATG8 family proteins for their conjugation with phosphatidylethanolamine. Both systems are needed for the ATG8 association to Cvt vesicles and autophagosomes membranes. Required for autophagic death induced by caspase-8 inhibition. Facilitates LC3-I lipidation with phosphatidylethanolamine to form LC3-II which is found on autophagosomal membranes. Required for mitophagy which contributes to regulate mitochondrial quantity and quality by eliminating the mitochondria to a basal level to fulfill cellular energy requirements and preventing excess ROS production. Modulates p53/TP53 activity to regulate cell cycle and survival during metabolic stress. Also plays a key role in the maintenance of axonal homeostasis, the prevention of axonal degeneration, the maintenance of hematopoietic stem cells, the formation of Paneth cell granules, as well as in adipose differentiation. Plays a role in regulating the liver clock and glucose metabolism by mediating the autophagic degradation of CRY1 (clock repressor) in a time-dependent manner. This chain is Ubiquitin-like modifier-activating enzyme ATG7, found in Homo sapiens (Human).